We begin with the raw amino-acid sequence, 275 residues long: Large ribosomal subunit protein uL2 (275 aa).

Disordered stretches follow at residues 38-59 and 222-275; these read KKHAGRNNHGHITTRHRGGGHK and GSAM…RKQK. Composition is skewed to basic residues over residues 39 to 59 and 254 to 275; these read KHAGRNNHGHITTRHRGGGHK and MGKKTRHNPRTQRFIVRTRKQK.

This sequence belongs to the universal ribosomal protein uL2 family. Part of the 50S ribosomal subunit. Forms a bridge to the 30S subunit in the 70S ribosome.

Functionally, one of the primary rRNA binding proteins. Required for association of the 30S and 50S subunits to form the 70S ribosome, for tRNA binding and peptide bond formation. It has been suggested to have peptidyltransferase activity; this is somewhat controversial. Makes several contacts with the 16S rRNA in the 70S ribosome. This chain is Large ribosomal subunit protein uL2, found in Herpetosiphon aurantiacus (strain ATCC 23779 / DSM 785 / 114-95).